The sequence spans 255 residues: 4-hydroxy-tetrahydrodipicolinate reductase (255 aa).

Residues 9–14, D35, 89–91, and 115–118 contribute to the NAD(+) site; these read GFKGKM, GTT, and APNF. H145 (proton donor/acceptor) is an active-site residue. H146 contributes to the (S)-2,3,4,5-tetrahydrodipicolinate binding site. Catalysis depends on K149, which acts as the Proton donor. Residue 155-156 participates in (S)-2,3,4,5-tetrahydrodipicolinate binding; the sequence is GT.

The protein belongs to the DapB family.

The protein localises to the cytoplasm. It catalyses the reaction (S)-2,3,4,5-tetrahydrodipicolinate + NAD(+) + H2O = (2S,4S)-4-hydroxy-2,3,4,5-tetrahydrodipicolinate + NADH + H(+). It carries out the reaction (S)-2,3,4,5-tetrahydrodipicolinate + NADP(+) + H2O = (2S,4S)-4-hydroxy-2,3,4,5-tetrahydrodipicolinate + NADPH + H(+). The protein operates within amino-acid biosynthesis; L-lysine biosynthesis via DAP pathway; (S)-tetrahydrodipicolinate from L-aspartate: step 4/4. Functionally, catalyzes the conversion of 4-hydroxy-tetrahydrodipicolinate (HTPA) to tetrahydrodipicolinate. In Streptococcus pneumoniae (strain 70585), this protein is 4-hydroxy-tetrahydrodipicolinate reductase.